Consider the following 189-residue polypeptide: Glycerol-3-phosphate acyltransferase (189 aa).

5 helical membrane passes run 1-21 (MVWL…AVLL), 50-70 (KLAI…VLVA), 72-92 (WLGL…IGHL), 111-131 (MLLG…LLTF), and 151-171 (LLAW…GLIV).

It belongs to the PlsY family. As to quaternary structure, probably interacts with PlsX.

It localises to the cell inner membrane. It catalyses the reaction an acyl phosphate + sn-glycerol 3-phosphate = a 1-acyl-sn-glycero-3-phosphate + phosphate. It functions in the pathway lipid metabolism; phospholipid metabolism. Its function is as follows. Catalyzes the transfer of an acyl group from acyl-phosphate (acyl-PO(4)) to glycerol-3-phosphate (G3P) to form lysophosphatidic acid (LPA). This enzyme utilizes acyl-phosphate as fatty acyl donor, but not acyl-CoA or acyl-ACP. The protein is Glycerol-3-phosphate acyltransferase of Pseudomonas aeruginosa (strain LESB58).